We begin with the raw amino-acid sequence, 160 residues long: Nucleotide-binding protein VSAL_I1728 (160 aa).

It belongs to the YajQ family.

Its function is as follows. Nucleotide-binding protein. The chain is Nucleotide-binding protein VSAL_I1728 from Aliivibrio salmonicida (strain LFI1238) (Vibrio salmonicida (strain LFI1238)).